Here is a 635-residue protein sequence, read N- to C-terminus: MHLSEITHPNQLHGLSIRQLQQIARQIRDKHLQTVAEFGGHLGPGLGVVELTLGLYQTLDLDRDKVIWDVGHQAYPHKLITGRYSDFHTLRQKDGIAGYLKRGENKFDHFGAGHASTSISAALGMALARDMNGEKFKAVAVIGDGALTGGMALEAINHAGHLPKTNLLVVLNDNEMSISPNVGAIPRYLNKMRLSPPVQFIKDNFEEQFKHIPFVGESLSPELGRIKEGMKRLAVPKVGAVFEELGFTYMGPVDGHNLEELIATFQQAHQIAGPVLVHVATIKGKGYELAEKDQVGYHAQTPFNLTTGKAIPSNKPKPPAYAKVFSHTLVKLAEQNPKIIGITAAMATGTGLDKLQAKLPNQYIDVGIAEQHAVTLAAGLACEGMRPVAAIYSTFLQRAYDQIIHDVCIQNLPVFFCLDRAGIVGSDGPTHQGMYDIAYLRCIPNIVMMAPKDEAEMQRMVVTGIEYTTGPIAMRFPRGNGYGVPLMEEGWEPLEIGKGEILRNGDDVLIIGYGTMVYPSMQAAEILSEHGIEATVINARFVKPLDTELIVPLAQKIGRVVTLEEGCVMGGFGSAVAEALLDADVVVPVKRIGIPDVLVEHATPDESKAELGLTSRQIAERVLQAYFQKQVSAVI.

Thiamine diphosphate contacts are provided by residues histidine 72 and 113–115 (GHA). Residue aspartate 144 coordinates Mg(2+). Thiamine diphosphate contacts are provided by residues 145–146 (GA), asparagine 174, tyrosine 287, and glutamate 370. Mg(2+) is bound at residue asparagine 174.

This sequence belongs to the transketolase family. DXPS subfamily. As to quaternary structure, homodimer. The cofactor is Mg(2+). It depends on thiamine diphosphate as a cofactor.

It catalyses the reaction D-glyceraldehyde 3-phosphate + pyruvate + H(+) = 1-deoxy-D-xylulose 5-phosphate + CO2. The protein operates within metabolic intermediate biosynthesis; 1-deoxy-D-xylulose 5-phosphate biosynthesis; 1-deoxy-D-xylulose 5-phosphate from D-glyceraldehyde 3-phosphate and pyruvate: step 1/1. In terms of biological role, catalyzes the acyloin condensation reaction between C atoms 2 and 3 of pyruvate and glyceraldehyde 3-phosphate to yield 1-deoxy-D-xylulose-5-phosphate (DXP). The polypeptide is 1-deoxy-D-xylulose-5-phosphate synthase (Trichormus variabilis (strain ATCC 29413 / PCC 7937) (Anabaena variabilis)).